The primary structure comprises 185 residues: CASP-like protein 2D1 (185 aa).

Residues 1 to 15 lie on the Cytoplasmic side of the membrane; the sequence is MRTHIDDSASGKNHH. Residues 16–36 traverse the membrane as a helical segment; the sequence is LPMLWFFDSSLRLCAIPLSVA. The Extracellular portion of the chain corresponds to 37 to 64; it reads TMWITVTNKEDNSSYGMLKYNNLSALKY. N-linked (GlcNAc...) asparagine glycans are attached at residues Asn48 and Asn58. Residues 65-85 form a helical membrane-spanning segment; that stretch reads MVLVSALCACYALLAAACSLV. At 86–92 the chain is on the cytoplasmic side; that stretch reads RCFVSKA. The helical transmembrane segment at 93-113 threads the bilayer; it reads WIFFVSDQIVAYLAITSVAAV. At 114–145 the chain is on the extracellular side; the sequence is MEMYYLAYNGAKEDSWSEACSSYGSFCSKVKL. Residues 146-166 traverse the membrane as a helical segment; the sequence is ALILHTITFCCFFVIAVISAF. Over 167-185 the chain is Cytoplasmic; that stretch reads RAFSVFDPPFVNSQEVQGD.

Belongs to the Casparian strip membrane proteins (CASP) family. In terms of assembly, homodimer and heterodimers.

It localises to the cell membrane. This chain is CASP-like protein 2D1, found in Glycine max (Soybean).